We begin with the raw amino-acid sequence, 1709 residues long: Sialoadhesin (1709 aa).

Residues 1–19 form the signal peptide; the sequence is MGFLPKLLLLASFFPAGQA. The 117-residue stretch at 20 to 136 folds into the Ig-like V-type domain; the sequence is SWGVSSPQDV…DVKGTLVTVT (117 aa). Residues 20-1641 are Extracellular-facing; it reads SWGVSSPQDV…ALHRLHQFQQ (1622 aa). Disulfide bonds link C36–C166, C41–C98, C160–C217, and C262–C305. N-acetylneuraminate-binding positions include Y63, R116, and 122–126; that span reads VNRWS. Ig-like C2-type domains lie at 139-233, 238-320, 326-405, 411-507, 511-593, 601-705, 708-785, 799-894, 898-977, 984-1083, 1085-1165, and 1176-1248; these read PRVP…IHLQ, PKGV…PPIS, AEVQ…GPVS, PPLT…LDFH, ARLL…AVLT, PTFT…ATFN, ATVL…AQLS, PKLS…FQVR, VQVS…APIS, PRHV…ADFD, QAVN…RPIT, and RLTY…SPLG. N159 carries an N-linked (GlcNAc...) asparagine glycan. Residues N265 and N339 are each glycosylated (N-linked (GlcNAc...) asparagine). 2 cysteine pairs are disulfide-bonded: C346–C390 and C433–C491. N-linked (GlcNAc...) asparagine glycosylation is present at N499. Intrachain disulfides connect C531–C575 and C624–C689. Residues N697, N726, N730, and N741 are each glycosylated (N-linked (GlcNAc...) asparagine). 2 disulfide bridges follow: C729/C774 and C817/C876. N-linked (GlcNAc...) asparagine glycosylation occurs at N886. Disulfide bonds link C916–C960 and C1005–C1067. N1104 and N1138 each carry an N-linked (GlcNAc...) asparagine glycan. Intrachain disulfides connect C1107-C1149 and C1193-C1241. A glycan (N-linked (GlcNAc...) asparagine) is linked at N1251. Ig-like C2-type domains lie at 1259-1341, 1350-1442, 1445-1528, and 1536-1631; these read EGVR…AALQ, VLSS…RLQV, ARVV…VMLR, and PTMM…FGVR. Disulfide bonds link C1281-C1324 and C1367-C1425. N-linked (GlcNAc...) asparagine glycans are attached at residues N1462 and N1476. Disulfide bonds link C1465–C1511 and C1554–C1613. Residues 1642–1662 traverse the membrane as a helical segment; it reads LLWVLGLLVGLLLLLLGLGAC. The Cytoplasmic segment spans residues 1663 to 1709; it reads YTWRRRRVCKQSMGENSVEMAFQKETTQLIDPDAATCETSTCAPPLG.

Belongs to the immunoglobulin superfamily. SIGLEC (sialic acid binding Ig-like lectin) family. As to quaternary structure, interacts with TYROBP. Interacts with CLEC10A. As to expression, expressed by macrophages in various tissues. High levels are found in spleen, lymph node, perivascular macrophages in brain and lower levels in bone marrow, liver Kupffer cells and lamina propria of colon and lung. Also expressed by inflammatory macrophages in rheumatoid arthritis.

Its subcellular location is the cell membrane. The protein localises to the secreted. Macrophage-restricted adhesion molecule that mediates sialic-acid dependent binding to lymphocytes, including granulocytes, monocytes, natural killer cells, B-cells and CD8 T-cells. Plays a crucial role in limiting bacterial dissemination by engaging sialylated bacteria to promote effective phagocytosis and antigen presentation for the adaptive immune response. Mediates the uptake of various enveloped viruses via sialic acid recognition and subsequently induces the formation of intracellular compartments filled with virions (VCCs). In turn, enhances macrophage-to-T-cell transmission of several viruses including HIV-1 or SARS-CoV-2. Acts as an endocytic receptor mediating clathrin dependent endocytosis. Preferentially binds to alpha-2,3-linked sialic acid. Binds to SPN/CD43 on T-cells. May play a role in hemopoiesis. Plays a role in the inhibition of antiviral innate immune by promoting TBK1 degradation via TYROBP and TRIM27-mediated ubiquitination. Functionally, (Microbial infection) Facilitates viral cytoplasmic entry into activated dendritic cells via recognition of sialylated gangliosides pesent on viral membrane. The polypeptide is Sialoadhesin (SIGLEC1) (Homo sapiens (Human)).